Reading from the N-terminus, the 432-residue chain is Glutamyl-tRNA reductase (432 aa).

Residues 55 to 58 (TCNR), Ser113, 118 to 120 (EAQ), and Gln124 each bind substrate. Cys56 (nucleophile) is an active-site residue. An NADP(+)-binding site is contributed by 193-198 (GAGEMI).

This sequence belongs to the glutamyl-tRNA reductase family. Homodimer.

It carries out the reaction (S)-4-amino-5-oxopentanoate + tRNA(Glu) + NADP(+) = L-glutamyl-tRNA(Glu) + NADPH + H(+). The protein operates within porphyrin-containing compound metabolism; protoporphyrin-IX biosynthesis; 5-aminolevulinate from L-glutamyl-tRNA(Glu): step 1/2. In terms of biological role, catalyzes the NADPH-dependent reduction of glutamyl-tRNA(Glu) to glutamate 1-semialdehyde (GSA). The sequence is that of Glutamyl-tRNA reductase from Paracidovorax citrulli (strain AAC00-1) (Acidovorax citrulli).